Here is a 513-residue protein sequence, read N- to C-terminus: uncharacterized protein (513 aa).

Disordered stretches follow at residues 72-113 (GVVP…TGQF) and 155-262 (IMGG…NPRF). Positions 82 to 106 (ANRTANPNTNSNPNPNATNAQPNPT) are enriched in low complexity. Composition is skewed to polar residues over residues 164-189 (EANSEQARNANTETSNPPFASAQTQG) and 210-228 (TPLNQPPSYAASTQPEFQQ). Residues 229 to 238 (TTSPIFSSSS) are compositionally biased toward low complexity. Residues 239–248 (TPPPPPPRPS) show a composition bias toward pro residues. Residues 253–262 (GESQNTNPRF) are compositionally biased toward polar residues. The segment at 396-437 (CTICMEMFKINDDVIQLPCKHYFHENCIKPWLRVNGTCAICR) adopts an RING-type; atypical zinc-finger fold. Positions 439-513 (PVDPNSQQRN…DDFVDEEPLE (75 aa)) are disordered. The segment covering 442-493 (PNSQQRNNTSTDSANGHNPSNHANPSTSTTNDQGATLRNESFNAASQSNLSS) has biased composition (polar residues).

This is an uncharacterized protein from Schizosaccharomyces pombe (strain 972 / ATCC 24843) (Fission yeast).